The primary structure comprises 371 residues: 2-aminoethylphosphonate--pyruvate transaminase (371 aa).

Lys195 carries the post-translational modification N6-(pyridoxal phosphate)lysine.

It belongs to the class-V pyridoxal-phosphate-dependent aminotransferase family. PhnW subfamily. Homotetramer; however this is for an enzyme with a molecular weight of 16500, which is in disagreement with the weight of this protein. It depends on pyridoxal 5'-phosphate as a cofactor.

The catalysed reaction is (2-aminoethyl)phosphonate + pyruvate = phosphonoacetaldehyde + L-alanine. With respect to regulation, inhibited by phosphonic acids and very slightly inhibited by aminophosphonic acids. Its function is as follows. Involved in phosphonate degradation. This chain is 2-aminoethylphosphonate--pyruvate transaminase (phnW), found in Pseudomonas aeruginosa (strain ATCC 15692 / DSM 22644 / CIP 104116 / JCM 14847 / LMG 12228 / 1C / PRS 101 / PAO1).